Reading from the N-terminus, the 842-residue chain is Leucine--tRNA ligase (842 aa).

A 'HIGH' region motif is present at residues 44-55 (PYPSANGLHVGH). Residues 619–623 (KMSKS) carry the 'KMSKS' region motif. An ATP-binding site is contributed by K622.

Belongs to the class-I aminoacyl-tRNA synthetase family.

It is found in the cytoplasm. The enzyme catalyses tRNA(Leu) + L-leucine + ATP = L-leucyl-tRNA(Leu) + AMP + diphosphate. The sequence is that of Leucine--tRNA ligase from Borrelia turicatae (strain 91E135).